We begin with the raw amino-acid sequence, 130 residues long: Small ribosomal subunit protein uS8 (130 aa).

It belongs to the universal ribosomal protein uS8 family. In terms of assembly, part of the 30S ribosomal subunit. Contacts proteins S5 and S12.

Functionally, one of the primary rRNA binding proteins, it binds directly to 16S rRNA central domain where it helps coordinate assembly of the platform of the 30S subunit. This is Small ribosomal subunit protein uS8 from Mannheimia succiniciproducens (strain KCTC 0769BP / MBEL55E).